Consider the following 348-residue polypeptide: Endoplasmic reticulum junction formation protein lunapark-A (348 aa).

Residues 1–43 (MSVFCLQAKPTTVEILEGIDKDIQILEDYSVKYQRQMKAVVGR) lie on the Cytoplasmic side of the membrane. Residues 44-64 (LLLYSILLYLMAGVVVYSWYL) traverse the membrane as a helical segment. Topologically, residues 65-67 (PEQ) are lumenal. The chain crosses the membrane as a helical span at residues 68–88 (LMGRLVLGLPFLLFPLLVWIL). Residues 89 to 348 (RKVLILFFAR…EEDKQSDSGD (260 aa)) are Cytoplasmic-facing. Residues 105-126 (FKLEDLKAQKRKILEDVMETET) are a coiled coil. The segment at 142-211 (KKKTDFDSTP…HSAPGGPPER (70 aa)) is disordered. A C4-type; plays a role in ER morphology zinc finger spans residues 277-302 (CQQCLSHNGMALKEEFEYVAFRCAYC). Residues 313–348 (PQAPRLPETAGEPKLPCDLNSSSCAAEEDKQSDSGD) are disordered. Positions 339–348 (EEDKQSDSGD) are enriched in basic and acidic residues.

Belongs to the lunapark family. In terms of assembly, homodimer; homodimerization requires the C4-type zinc finger motif and decreases during mitosis in a phosphorylation-dependent manner. Post-translationally, phosphorylated. Phosphorylation occurs during interphase. Phosphorylation also occurs during mitosis; these phosphorylations reduce both its homodimerization and the ER three-way tubular junction formation.

It localises to the endoplasmic reticulum membrane. Its function is as follows. Endoplasmic reticulum (ER)-shaping membrane protein that plays a role in determining ER morphology. Involved in the stabilization of nascent three-way ER tubular junctions within the ER network. May also play a role as a curvature-stabilizing protein within three-way ER tubular junction network. The chain is Endoplasmic reticulum junction formation protein lunapark-A (lnpka) from Takifugu rubripes (Japanese pufferfish).